A 145-amino-acid polypeptide reads, in one-letter code: MTQTIFVLNGPNLNMLGKREPGIYGGKTLKDIEADCKAAGRELGLDIDFRQSNHEGTLVDWFHEADEKAVGVAINAGAYTHTSVALHDAIRAISIPVVELHISNVHAREEFRHKSMIAPACKGVICGFGPHSYILALHALKNITA.

The active-site Proton acceptor is the tyrosine 24. Positions 75, 81, and 88 each coordinate substrate. Histidine 101 serves as the catalytic Proton donor. Substrate contacts are provided by residues 102-103 (IS) and arginine 112.

Belongs to the type-II 3-dehydroquinase family. As to quaternary structure, homododecamer.

It catalyses the reaction 3-dehydroquinate = 3-dehydroshikimate + H2O. The protein operates within metabolic intermediate biosynthesis; chorismate biosynthesis; chorismate from D-erythrose 4-phosphate and phosphoenolpyruvate: step 3/7. Catalyzes a trans-dehydration via an enolate intermediate. This chain is 3-dehydroquinate dehydratase, found in Rhizobium johnstonii (strain DSM 114642 / LMG 32736 / 3841) (Rhizobium leguminosarum bv. viciae).